The sequence spans 321 residues: Malate dehydrogenase (321 aa).

NAD(+) is bound by residues 10 to 15 and D34; that span reads GAGQIG. 2 residues coordinate substrate: R83 and R89. Residues N96 and 119–121 contribute to the NAD(+) site; that span reads ITN. N121 and R152 together coordinate substrate. The Proton acceptor role is filled by H176.

Belongs to the LDH/MDH superfamily. MDH type 3 family.

The enzyme catalyses (S)-malate + NAD(+) = oxaloacetate + NADH + H(+). In terms of biological role, catalyzes the reversible oxidation of malate to oxaloacetate. This is Malate dehydrogenase from Methylocella silvestris (strain DSM 15510 / CIP 108128 / LMG 27833 / NCIMB 13906 / BL2).